We begin with the raw amino-acid sequence, 274 residues long: 2-dehydro-3-deoxyphosphooctonate aldolase (274 aa).

This sequence belongs to the KdsA family.

Its subcellular location is the cytoplasm. The catalysed reaction is D-arabinose 5-phosphate + phosphoenolpyruvate + H2O = 3-deoxy-alpha-D-manno-2-octulosonate-8-phosphate + phosphate. Its pathway is carbohydrate biosynthesis; 3-deoxy-D-manno-octulosonate biosynthesis; 3-deoxy-D-manno-octulosonate from D-ribulose 5-phosphate: step 2/3. It functions in the pathway bacterial outer membrane biogenesis; lipopolysaccharide biosynthesis. In Rickettsia conorii (strain ATCC VR-613 / Malish 7), this protein is 2-dehydro-3-deoxyphosphooctonate aldolase.